Consider the following 359-residue polypeptide: Phosphate acyltransferase (359 aa).

It belongs to the PlsX family. As to quaternary structure, homodimer. Probably interacts with PlsY.

The protein resides in the cytoplasm. The catalysed reaction is a fatty acyl-[ACP] + phosphate = an acyl phosphate + holo-[ACP]. Its pathway is lipid metabolism; phospholipid metabolism. Its function is as follows. Catalyzes the reversible formation of acyl-phosphate (acyl-PO(4)) from acyl-[acyl-carrier-protein] (acyl-ACP). This enzyme utilizes acyl-ACP as fatty acyl donor, but not acyl-CoA. This is Phosphate acyltransferase from Koribacter versatilis (strain Ellin345).